A 271-amino-acid polypeptide reads, in one-letter code: Regulatory protein RecX (271 aa).

Belongs to the RecX family.

Its subcellular location is the cytoplasm. Functionally, modulates RecA activity. This is Regulatory protein RecX from Lactobacillus delbrueckii subsp. bulgaricus (strain ATCC 11842 / DSM 20081 / BCRC 10696 / JCM 1002 / NBRC 13953 / NCIMB 11778 / NCTC 12712 / WDCM 00102 / Lb 14).